Reading from the N-terminus, the 509-residue chain is Glycogen synthase (509 aa).

Lys-47 lines the ADP-alpha-D-glucose pocket.

Belongs to the glycosyltransferase 1 family. Bacterial/plant glycogen synthase subfamily.

It catalyses the reaction [(1-&gt;4)-alpha-D-glucosyl](n) + ADP-alpha-D-glucose = [(1-&gt;4)-alpha-D-glucosyl](n+1) + ADP + H(+). It functions in the pathway glycan biosynthesis; glycogen biosynthesis. Functionally, synthesizes alpha-1,4-glucan chains using ADP-glucose. The chain is Glycogen synthase from Xanthomonas oryzae pv. oryzae (strain PXO99A).